Consider the following 224-residue polypeptide: Acyl-protein thioesterase 1 (224 aa).

Residues S116, D170, and H203 each act as charge relay system in the active site.

The protein belongs to the AB hydrolase superfamily. AB hydrolase 2 family.

It localises to the cytoplasm. The protein localises to the nucleus. The enzyme catalyses S-hexadecanoyl-L-cysteinyl-[protein] + H2O = L-cysteinyl-[protein] + hexadecanoate + H(+). In terms of biological role, hydrolyzes fatty acids from S-acylated cysteine residues in proteins with a strong preference for palmitoylated G-alpha proteins over other acyl substrates. Mediates the deacylation of G-alpha proteins such as GPA1 in vivo, but has weak or no activity toward palmitoylated Ras proteins. Has weak lysophospholipase activity in vitro; however such activity may not exist in vivo. The sequence is that of Acyl-protein thioesterase 1 from Schizosaccharomyces pombe (strain 972 / ATCC 24843) (Fission yeast).